The following is a 465-amino-acid chain: Cysteine--tRNA ligase (465 aa).

Cys29 serves as a coordination point for Zn(2+). The short motif at 31-41 is the 'HIGH' region element; that stretch reads PTVYNYIHIGN. Residues Cys209, His234, and Glu238 each coordinate Zn(2+). The short motif at 266–270 is the 'KMSKS' region element; that stretch reads KMSKS. Lys269 contributes to the ATP binding site. The residue at position 270 (Ser270) is a Phosphoserine.

The protein belongs to the class-I aminoacyl-tRNA synthetase family. Monomer. It depends on Zn(2+) as a cofactor.

Its subcellular location is the cytoplasm. The enzyme catalyses tRNA(Cys) + L-cysteine + ATP = L-cysteinyl-tRNA(Cys) + AMP + diphosphate. The polypeptide is Cysteine--tRNA ligase (Bacillus cereus (strain 03BB102)).